The primary structure comprises 209 residues: Ribonuclease HII (209 aa).

Residues 19-209 enclose the RNase H type-2 domain; sequence CTIVGVDEVG…ASGITKLYNK (191 aa). Residues D25, E26, and D118 each contribute to the a divalent metal cation site.

It belongs to the RNase HII family. Mn(2+) is required as a cofactor. The cofactor is Mg(2+).

The protein localises to the cytoplasm. The catalysed reaction is Endonucleolytic cleavage to 5'-phosphomonoester.. Functionally, endonuclease that specifically degrades the RNA of RNA-DNA hybrids. This is Ribonuclease HII from Ehrlichia chaffeensis (strain ATCC CRL-10679 / Arkansas).